The primary structure comprises 102 residues: MAGQKIRVKLKAFDHRLIDQSTYEIVATAKRTGATVSGPIPLPTKKEIYTVLRSPHVNKKSREQFELKTHKRLIDILDTNEDTVEALMKLQLPAGVSVDIKS.

Belongs to the universal ribosomal protein uS10 family. Part of the 30S ribosomal subunit.

In terms of biological role, involved in the binding of tRNA to the ribosomes. This Leptospira borgpetersenii serovar Hardjo-bovis (strain JB197) protein is Small ribosomal subunit protein uS10.